Reading from the N-terminus, the 346-residue chain is Phosphoribosylformylglycinamidine cyclo-ligase (346 aa).

Belongs to the AIR synthase family.

It localises to the cytoplasm. The catalysed reaction is 2-formamido-N(1)-(5-O-phospho-beta-D-ribosyl)acetamidine + ATP = 5-amino-1-(5-phospho-beta-D-ribosyl)imidazole + ADP + phosphate + H(+). The protein operates within purine metabolism; IMP biosynthesis via de novo pathway; 5-amino-1-(5-phospho-D-ribosyl)imidazole from N(2)-formyl-N(1)-(5-phospho-D-ribosyl)glycinamide: step 2/2. The chain is Phosphoribosylformylglycinamidine cyclo-ligase from Bacillus anthracis (strain A0248).